We begin with the raw amino-acid sequence, 223 residues long: Cytidylate kinase (223 aa).

12-20 (GPSGVGKGT) contacts ATP.

Belongs to the cytidylate kinase family. Type 1 subfamily.

It is found in the cytoplasm. It carries out the reaction CMP + ATP = CDP + ADP. The catalysed reaction is dCMP + ATP = dCDP + ADP. The sequence is that of Cytidylate kinase from Xylella fastidiosa (strain M12).